Here is a 327-residue protein sequence, read N- to C-terminus: Phenylalanine--tRNA ligase alpha subunit (327 aa).

Glu252 contributes to the Mg(2+) binding site.

Belongs to the class-II aminoacyl-tRNA synthetase family. Phe-tRNA synthetase alpha subunit type 1 subfamily. In terms of assembly, tetramer of two alpha and two beta subunits. Mg(2+) serves as cofactor.

Its subcellular location is the cytoplasm. It catalyses the reaction tRNA(Phe) + L-phenylalanine + ATP = L-phenylalanyl-tRNA(Phe) + AMP + diphosphate + H(+). This Salmonella agona (strain SL483) protein is Phenylalanine--tRNA ligase alpha subunit.